The primary structure comprises 258 residues: Aspartate/glutamate leucyltransferase (258 aa).

This sequence belongs to the R-transferase family. Bpt subfamily.

The protein resides in the cytoplasm. It carries out the reaction N-terminal L-glutamyl-[protein] + L-leucyl-tRNA(Leu) = N-terminal L-leucyl-L-glutamyl-[protein] + tRNA(Leu) + H(+). It catalyses the reaction N-terminal L-aspartyl-[protein] + L-leucyl-tRNA(Leu) = N-terminal L-leucyl-L-aspartyl-[protein] + tRNA(Leu) + H(+). In terms of biological role, functions in the N-end rule pathway of protein degradation where it conjugates Leu from its aminoacyl-tRNA to the N-termini of proteins containing an N-terminal aspartate or glutamate. This is Aspartate/glutamate leucyltransferase from Rhodopseudomonas palustris (strain TIE-1).